A 336-amino-acid polypeptide reads, in one-letter code: Aldehyde reductase AdhA (336 aa).

Residues Cys-36, Cys-39, His-61, Cys-92, Cys-95, Cys-98, Cys-106, and Cys-148 each coordinate Zn(2+).

Belongs to the zinc-containing alcohol dehydrogenase family. Homotetramer. Requires Zn(2+) as cofactor.

Its subcellular location is the cytoplasm. The catalysed reaction is a primary alcohol + NADP(+) = an aldehyde + NADPH + H(+). Its function is as follows. Active on a wide variety of primary alcohols and their corresponding aldehydes, but not against ketones nor secondary alcohols. Active on aliphatic compounds up to 5 carbons in length and aromatic alcohols, less effective on branched-chain primary alcohols. Prefers NADPH to NADH. Its catalytic efficiency is greatest for aldehydes, suggesting the reduction of aromatic and medium-chain aliphatic aldehydes is its in vivo activity. Plays a role in tolerance to internally produced ethanol. This chain is Aldehyde reductase AdhA, found in Synechocystis sp. (strain ATCC 27184 / PCC 6803 / Kazusa).